Here is a 310-residue protein sequence, read N- to C-terminus: 4-hydroxyproline epimerase (310 aa).

The Proton acceptor role is filled by cysteine 88. Substrate is bound by residues 89-90 (GH), histidine 208, and aspartate 232. The Proton donor role is filled by cysteine 236. 237–238 (GT) is a substrate binding site.

It belongs to the proline racemase family. Homodimer.

It catalyses the reaction trans-4-hydroxy-L-proline = cis-4-hydroxy-D-proline. Its activity is regulated as follows. Inhibited by iodoacetate, iodoacetamide and by high amounts (10 mM) of pyrrole-2-carboxylic acid (PYC). Not inhibited by PYC at 1 mM. Its function is as follows. Allows intracellular utilization of 4-hydroxyproline, one of the major constituents of host collagen, by converting 4-hydroxy-L-proline to 4-hydroxy-D-proline, which can be further metabolized by intracellular 4-hydroxy-D-proline oxidases. This chain is 4-hydroxyproline epimerase, found in Burkholderia pseudomallei (strain K96243).